The primary structure comprises 417 residues: UDP-N-acetylglucosamine 1-carboxyvinyltransferase (417 aa).

Residue 23–24 coordinates phosphoenolpyruvate; that stretch reads KN. R93 is a binding site for UDP-N-acetyl-alpha-D-glucosamine. The active-site Proton donor is the D117. UDP-N-acetyl-alpha-D-glucosamine-binding residues include D305 and V327.

The protein belongs to the EPSP synthase family. MurA subfamily.

The protein localises to the cytoplasm. The enzyme catalyses phosphoenolpyruvate + UDP-N-acetyl-alpha-D-glucosamine = UDP-N-acetyl-3-O-(1-carboxyvinyl)-alpha-D-glucosamine + phosphate. It participates in cell wall biogenesis; peptidoglycan biosynthesis. Cell wall formation. Adds enolpyruvyl to UDP-N-acetylglucosamine. The sequence is that of UDP-N-acetylglucosamine 1-carboxyvinyltransferase from Mycolicibacterium paratuberculosis (strain ATCC BAA-968 / K-10) (Mycobacterium paratuberculosis).